Here is a 344-residue protein sequence, read N- to C-terminus: Melanocyte-stimulating hormone receptor (344 aa).

The Extracellular portion of the chain corresponds to 1–37 (MPMQGAQRKLLGSLNSTPTATSNLGLAANHTGAPCLE). Residue asparagine 29 is glycosylated (N-linked (GlcNAc...) asparagine). Residues 38–63 (VPIPDGLFLSLGLVSLVENVLVVAAI) traverse the membrane as a helical segment. At 64 to 72 (AKNRNLHSS) the chain is on the cytoplasmic side. Residues 73–93 (MYCFICCLAVSDLLVSGSNML) traverse the membrane as a helical segment. The Extracellular segment spans residues 94-118 (ETAIILLLEAGALVTRASVVQQLHN). The chain crosses the membrane as a helical span at residues 119–140 (TIDVLTCSSMLCSLCFLGAIAV). Residues 141-163 (DRYISIFYALRYHSIMTLPRAQR) lie on the Cytoplasmic side of the membrane. A helical membrane pass occupies residues 164–183 (AIAAIWVASVLSSTLFITYY). At 184–191 (DHAAVLLC) the chain is on the extracellular side. The helical transmembrane segment at 192–211 (LVVFFLAMLVLMAVLYVHML) threads the bilayer. Residues 212–240 (ARACQHAQGIIRLHKRQPPAHKGFGLRGA) are Cytoplasmic-facing. A helical transmembrane segment spans residues 241 to 266 (ATLTILLGIFFLCWGPFFLHLTLVVF). At 267 to 279 (CPQHMTCSCIFKN) the chain is on the extracellular side. Residues 280-300 (FKVFLTLIICNTIIDPLIYAF) form a helical membrane-spanning segment. Residues 301–344 (RSQELRRTLKEVLLCSRWPGCWAEGGGDSVWPGSCVTLRGPLPP) are Cytoplasmic-facing. Cysteine 315 carries S-palmitoyl cysteine lipidation.

Belongs to the G-protein coupled receptor 1 family. In terms of assembly, interacts with MGRN1, but does not undergo MGRN1-mediated ubiquitination; this interaction competes with GNAS-binding and thus inhibits agonist-induced cAMP production. Interacts with OPN3; the interaction results in a decrease in MC1R-mediated cAMP signaling and ultimately a decrease in melanin production in melanocytes.

The protein localises to the cell membrane. Functionally, receptor for MSH (alpha, beta and gamma) and ACTH. The activity of this receptor is mediated by G proteins which activate adenylate cyclase. Mediates melanogenesis, the production of eumelanin (black/brown) and phaeomelanin (red/yellow), via regulation of cAMP signaling in melanocytes. This chain is Melanocyte-stimulating hormone receptor (MC1R), found in Callimico goeldii (Goeldi's marmoset).